The primary structure comprises 471 residues: Putative pentatricopeptide repeat-containing protein At1g53330 (471 aa).

PPR repeat units follow at residues 46 to 81, 82 to 116, 117 to 147, 151 to 185, 186 to 221, 222 to 256, 257 to 291, 292 to 326, 327 to 361, and 362 to 396; these read SLLC…RIVP, TEII…RCQR, TVKS…IDEF, DACT…KVKP, TGVT…GVRP, TVHI…KIKV, DAAI…GCKP, DTVT…GLKP, DVIS…GCSP, and DTLS…GYKP.

Belongs to the PPR family. P subfamily.

Its function is as follows. Involved during embryo development. This Arabidopsis thaliana (Mouse-ear cress) protein is Putative pentatricopeptide repeat-containing protein At1g53330.